A 150-amino-acid chain; its full sequence is 3-hydroxyacyl-[acyl-carrier-protein] dehydratase FabZ (150 aa).

The active site involves His-53.

This sequence belongs to the thioester dehydratase family. FabZ subfamily.

The protein localises to the cytoplasm. The enzyme catalyses a (3R)-hydroxyacyl-[ACP] = a (2E)-enoyl-[ACP] + H2O. Involved in unsaturated fatty acids biosynthesis. Catalyzes the dehydration of short chain beta-hydroxyacyl-ACPs and long chain saturated and unsaturated beta-hydroxyacyl-ACPs. This chain is 3-hydroxyacyl-[acyl-carrier-protein] dehydratase FabZ, found in Photorhabdus laumondii subsp. laumondii (strain DSM 15139 / CIP 105565 / TT01) (Photorhabdus luminescens subsp. laumondii).